Consider the following 181-residue polypeptide: Cytochrome b6-f complex iron-sulfur subunit (181 aa).

A disordered region spans residues 1–35 (MAQTGNFKSPARMSSLGQGAAPASAGAVTGGKPRE). Transmembrane regions (helical) follow at residues 53-73 (VGGV…RYIV) and 114-134 (GGSL…VHWD). The Rieske domain occupies 85–178 (LAVGPASDVP…VKIEDGKIVV (94 aa)). 4 residues coordinate [2Fe-2S] cluster: cysteine 124, histidine 126, cysteine 142, and histidine 145. Cysteine 129 and cysteine 144 form a disulfide bridge.

It belongs to the Rieske iron-sulfur protein family. It depends on [2Fe-2S] cluster as a cofactor.

Its subcellular location is the cell inner membrane. It carries out the reaction 2 oxidized [plastocyanin] + a plastoquinol + 2 H(+)(in) = 2 reduced [plastocyanin] + a plastoquinone + 4 H(+)(out). Functionally, component of the green S-bacteria bc-complex which consists of the Rieske protein and cytochrome b subunit and which appears to lack a cytochrome c1-equivalent. This complex has a comparatively low redox potential. In Chlorobaculum tepidum (strain ATCC 49652 / DSM 12025 / NBRC 103806 / TLS) (Chlorobium tepidum), this protein is Cytochrome b6-f complex iron-sulfur subunit (petC).